A 275-amino-acid polypeptide reads, in one-letter code: MEILYSPAKINLGLWIVDKRPDGYHEIFTLYHTLDFYDRIIIQEHPFLEVKTSMPEIKQEENIVYKAISLFESYTGIEQNLQVIIEKNIPVGGGLGGGSSNAATVLNYLNKKHDNILPEEKLFEIAVKLGADVPFFLKGGFAIGEGIGEKLTFLPKTLNEEIFIIYPNIKSDTKTVYSKVDKSILTNKGDLNIILSLINEYDIKKLEAYIENKLGNIALDLYPEIKEAYDFLNYLGFSPKVSGSGSCVYVIGRPTAEVEKAAAIKGWRLIKTKLK.

K9 is an active-site residue. Residue 90 to 100 (PVGGGLGGGSS) participates in ATP binding. The active site involves D132.

The protein belongs to the GHMP kinase family. IspE subfamily.

It catalyses the reaction 4-CDP-2-C-methyl-D-erythritol + ATP = 4-CDP-2-C-methyl-D-erythritol 2-phosphate + ADP + H(+). It participates in isoprenoid biosynthesis; isopentenyl diphosphate biosynthesis via DXP pathway; isopentenyl diphosphate from 1-deoxy-D-xylulose 5-phosphate: step 3/6. In terms of biological role, catalyzes the phosphorylation of the position 2 hydroxy group of 4-diphosphocytidyl-2C-methyl-D-erythritol. This Sulfurihydrogenibium sp. (strain YO3AOP1) protein is 4-diphosphocytidyl-2-C-methyl-D-erythritol kinase.